A 239-amino-acid polypeptide reads, in one-letter code: Ribosomal RNA large subunit methyltransferase E (239 aa).

The disordered stretch occupies residues 1 to 20; the sequence is MTKAPIAGNRTGRKLGQRVK. A compositionally biased stretch (basic residues) spans 11–20; sequence TGRKLGQRVK. S-adenosyl-L-methionine is bound by residues G81, W83, D104, D120, and D144. K184 serves as the catalytic Proton acceptor.

It belongs to the class I-like SAM-binding methyltransferase superfamily. RNA methyltransferase RlmE family.

It is found in the cytoplasm. It carries out the reaction uridine(2552) in 23S rRNA + S-adenosyl-L-methionine = 2'-O-methyluridine(2552) in 23S rRNA + S-adenosyl-L-homocysteine + H(+). Functionally, specifically methylates the uridine in position 2552 of 23S rRNA at the 2'-O position of the ribose in the fully assembled 50S ribosomal subunit. The polypeptide is Ribosomal RNA large subunit methyltransferase E (Rhizobium johnstonii (strain DSM 114642 / LMG 32736 / 3841) (Rhizobium leguminosarum bv. viciae)).